The chain runs to 777 residues: Ethylene receptor 4 (777 aa).

Helical transmembrane passes span 49–69 (LLIA…ATCA), 77–97 (AVLH…LAAF), and 113–133 (AAKV…LTFI). Cu cation is bound by residues Cys-88 and His-92. The GAF domain maps to 184–344 (DAHAILRTTA…VVADQAAVAL (161 aa)). The Histidine kinase domain occupies 387-521 (AMCHAMRRPV…NTGSGACRLS (135 aa)). Phosphohistidine; by autocatalysis is present on His-390. Residues 645–774 (RVLLADDDAM…ALGAQLCRVL (130 aa)) form the Response regulatory domain. Asp-696 carries the post-translational modification 4-aspartylphosphate.

It belongs to the ethylene receptor family. The cofactor is Cu cation.

The protein localises to the endoplasmic reticulum membrane. It catalyses the reaction ATP + protein L-histidine = ADP + protein N-phospho-L-histidine.. Its function is as follows. Ethylene receptor related to bacterial two-component regulators. Acts as a redundant negative regulator of ethylene signaling. This is Ethylene receptor 4 (ETR4) from Oryza sativa subsp. japonica (Rice).